Reading from the N-terminus, the 831-residue chain is Translation initiation factor IF-2 (831 aa).

The region spanning 329–499 (TRAPVVTVMG…LLIAEMQDLK (171 aa)) is the tr-type G domain. The G1 stretch occupies residues 338 to 345 (GHVDHGKT). Residue 338–345 (GHVDHGKT) participates in GTP binding. Positions 363–367 (GITQH) are G2. A G3 region spans residues 385–388 (DTPG). Residues 385–389 (DTPGH) and 439–442 (NKID) each bind GTP. The interval 439 to 442 (NKID) is G4. Positions 475–477 (SAL) are G5.

It belongs to the TRAFAC class translation factor GTPase superfamily. Classic translation factor GTPase family. IF-2 subfamily.

Its subcellular location is the cytoplasm. In terms of biological role, one of the essential components for the initiation of protein synthesis. Protects formylmethionyl-tRNA from spontaneous hydrolysis and promotes its binding to the 30S ribosomal subunits. Also involved in the hydrolysis of GTP during the formation of the 70S ribosomal complex. This is Translation initiation factor IF-2 from Rickettsia rickettsii (strain Iowa).